Consider the following 147-residue polypeptide: Shadow of prion protein (147 aa).

The first 24 residues, methionine 1–alanine 24, serve as a signal peptide directing secretion. Residues glycine 26–arginine 43 are compositionally biased toward gly residues. The tract at residues glycine 26 to alanine 45 is disordered. N-linked (GlcNAc...) asparagine glycosylation occurs at asparagine 107. The GPI-anchor amidated glycine moiety is linked to residue glycine 122. The propeptide at serine 123 to proline 147 is removed in mature form.

This sequence belongs to the SPRN family. Post-translationally, N-glycosylated. As to expression, mainly expressed in brain (at protein level). In brain, it is highly expressed in the hippocampus and cerebellum and is also expressed at lower level in other areas of the brain including the cerebral cortex, the thalamus and the medulla. In hippocampus and cerebellum it is highly expressed in the cell bodies of pyramidal cells and Purkinje cells, respectively.

It localises to the cell membrane. Its function is as follows. Prion-like protein that has PrP(C)-like neuroprotective activity. May act as a modulator for the biological actions of normal and abnormal PrP. This Mus musculus (Mouse) protein is Shadow of prion protein (Sprn).